A 335-amino-acid polypeptide reads, in one-letter code: Probable nicotianamine synthase 3 (335 aa).

It belongs to the nicotianamine synthase (NAS)-like family.

The catalysed reaction is 3 S-adenosyl-L-methionine = nicotianamine + 3 S-methyl-5'-thioadenosine + 3 H(+). In terms of biological role, synthesizes nicotianamine, a polyamine that is the first intermediate in the synthesis of the phytosiderophores of the mugineic acid type found in gramineae which serves as a sensor for the physiological iron status within the plant, and/or might be involved in the transport of iron. The sequence is that of Probable nicotianamine synthase 3 (NAS3) from Hordeum vulgare (Barley).